We begin with the raw amino-acid sequence, 447 residues long: Tubulin beta-1 chain (447 aa).

GTP is bound by residues Gln11, Glu69, Ser138, Gly142, Thr143, Gly144, Asn204, and Asn226. Glu69 provides a ligand contact to Mg(2+). Residues 424 to 447 (QYQDATAEEEGEGDEEEAEGEAAA) are disordered. Residues 429–447 (TAEEEGEGDEEEAEGEAAA) are compositionally biased toward acidic residues.

The protein belongs to the tubulin family. As to quaternary structure, dimer of alpha and beta chains. A typical microtubule is a hollow water-filled tube with an outer diameter of 25 nm and an inner diameter of 15 nM. Alpha-beta heterodimers associate head-to-tail to form protofilaments running lengthwise along the microtubule wall with the beta-tubulin subunit facing the microtubule plus end conferring a structural polarity. Microtubules usually have 13 protofilaments but different protofilament numbers can be found in some organisms and specialized cells. It depends on Mg(2+) as a cofactor.

It is found in the cytoplasm. The protein localises to the cytoskeleton. Functionally, tubulin is the major constituent of microtubules, a cylinder consisting of laterally associated linear protofilaments composed of alpha- and beta-tubulin heterodimers. Microtubules grow by the addition of GTP-tubulin dimers to the microtubule end, where a stabilizing cap forms. Below the cap, tubulin dimers are in GDP-bound state, owing to GTPase activity of alpha-tubulin. The polypeptide is Tubulin beta-1 chain (TUBB1) (Cyanophora paradoxa).